The following is a 228-amino-acid chain: Lipoprotein-releasing system ATP-binding protein LolD (228 aa).

The 221-residue stretch at 7–227 (LQLSGIERHY…TIEDGKVVEL (221 aa)) folds into the ABC transporter domain. 43–50 (APSGTGKS) contacts ATP.

Belongs to the ABC transporter superfamily. Lipoprotein translocase (TC 3.A.1.125) family. In terms of assembly, the complex is composed of two ATP-binding proteins (LolD) and two transmembrane proteins (LolC and LolE).

The protein resides in the cell inner membrane. Its function is as follows. Part of the ABC transporter complex LolCDE involved in the translocation of mature outer membrane-directed lipoproteins, from the inner membrane to the periplasmic chaperone, LolA. Responsible for the formation of the LolA-lipoprotein complex in an ATP-dependent manner. The polypeptide is Lipoprotein-releasing system ATP-binding protein LolD (Rhizobium meliloti (strain 1021) (Ensifer meliloti)).